Consider the following 336-residue polypeptide: uncharacterized protein (336 aa).

Residues 123–323 enclose the ATP-grasp domain; that stretch reads KTLMRDSGVP…YSSLINGILD (201 aa).

The protein belongs to the D-alanine--D-alanine ligase family.

Could be involved in the biosynthesis of a cell wall component. This is an uncharacterized protein from Sinorhizobium fredii (strain NBRC 101917 / NGR234).